Reading from the N-terminus, the 453-residue chain is tRNA modification GTPase MnmE (453 aa).

(6S)-5-formyl-5,6,7,8-tetrahydrofolate is bound by residues Arg22, Glu79, and Lys119. In terms of domain architecture, TrmE-type G spans 215–376; it reads GMKVVIAGRP…LKLHLKSLMG (162 aa). A K(+)-binding site is contributed by Asn225. Residues 225 to 230, 244 to 250, 269 to 272, and 334 to 337 contribute to the GTP site; these read NAGKSS, TEIAGTT, DTAG, and NKAD. Residue Ser229 coordinates Mg(2+). K(+)-binding residues include Thr244, Ile246, and Thr249. Thr250 is a Mg(2+) binding site. Lys453 lines the (6S)-5-formyl-5,6,7,8-tetrahydrofolate pocket.

Belongs to the TRAFAC class TrmE-Era-EngA-EngB-Septin-like GTPase superfamily. TrmE GTPase family. Homodimer. Heterotetramer of two MnmE and two MnmG subunits. Requires K(+) as cofactor.

Its subcellular location is the cytoplasm. In terms of biological role, exhibits a very high intrinsic GTPase hydrolysis rate. Involved in the addition of a carboxymethylaminomethyl (cmnm) group at the wobble position (U34) of certain tRNAs, forming tRNA-cmnm(5)s(2)U34. In Shewanella sp. (strain W3-18-1), this protein is tRNA modification GTPase MnmE.